The primary structure comprises 214 residues: Small ribosomal subunit protein eS1 (214 aa).

Belongs to the eukaryotic ribosomal protein eS1 family.

The polypeptide is Small ribosomal subunit protein eS1 (Aeropyrum pernix (strain ATCC 700893 / DSM 11879 / JCM 9820 / NBRC 100138 / K1)).